The sequence spans 255 residues: Keratin-associated protein 10-2 (255 aa).

Tandem repeats lie at residues 26–30, 36–40, 57–61, 79–83, 89–93, 99–103, 104–108, 109–113, 114–118, 120–124, 130–134, 145–149, 150–154, 162–166, 172–176, 182–186, 187–191, 192–196, 197–201, 209–213, 219–223, and 224–228. The tract at residues 26–228 is 22 X 5 AA repeats of C-C-X(3); sequence CCELPCGTPS…CCTSSCCRPS (203 aa).

It belongs to the KRTAP type 10 family. Interacts with hair keratins. As to expression, restricted to a narrow region of the hair fiber cuticle, lying approximately 20 cell layers above the apex of the dermal papilla of the hair root; not detected in any other tissues.

In terms of biological role, in the hair cortex, hair keratin intermediate filaments are embedded in an interfilamentous matrix, consisting of hair keratin-associated proteins (KRTAP), which are essential for the formation of a rigid and resistant hair shaft through their extensive disulfide bond cross-linking with abundant cysteine residues of hair keratins. The matrix proteins include the high-sulfur and high-glycine-tyrosine keratins. In Homo sapiens (Human), this protein is Keratin-associated protein 10-2 (KRTAP10-2).